Reading from the N-terminus, the 453-residue chain is Tol-Pal system protein TolB (453 aa).

An N-terminal signal peptide occupies residues 1–39 (MSFIPNTEAEALSALFSRRSVLGATAAGGLLATPLAAFA).

It belongs to the TolB family. As to quaternary structure, the Tol-Pal system is composed of five core proteins: the inner membrane proteins TolA, TolQ and TolR, the periplasmic protein TolB and the outer membrane protein Pal. They form a network linking the inner and outer membranes and the peptidoglycan layer.

The protein resides in the periplasm. In terms of biological role, part of the Tol-Pal system, which plays a role in outer membrane invagination during cell division and is important for maintaining outer membrane integrity. This Gluconobacter oxydans (strain 621H) (Gluconobacter suboxydans) protein is Tol-Pal system protein TolB.